The following is a 727-amino-acid chain: Synaptic vesicle glycoprotein 2C (727 aa).

The tract at residues 1–57 is interaction with SYT1; it reads MEDSYKDRTSLMKGAKDIAREVKKQTVKKVNQAVDRAQDEYTQRSYSRFQDEEDDDD. Over 1–154 the chain is Cytoplasmic; the sequence is MEDSYKDRTS…CGHGRFQWAL (154 aa). Disordered stretches follow at residues 24–84 and 109–128; these read KQTV…GHDE and VGQP…SERR. A phosphoserine mark is found at S75 and S76. T79 carries the phosphothreonine modification. The span at 113–128 shows a compositional bias: basic and acidic residues; the sequence is KGDEYKDRRELESERR. Residues 155-175 form a helical membrane-spanning segment; that stretch reads FFVLGMALMADGVEVFVVGFV. Residues 176–191 lie on the Extracellular side of the membrane; it reads LPSAETDLCIPNSGSG. A helical membrane pass occupies residues 192–212; the sequence is WLGSIVYLGMMVGAFFWGGLA. Residues 213 to 226 lie on the Cytoplasmic side of the membrane; sequence DKVGRKQSLLICMS. Residues 227 to 247 form a helical membrane-spanning segment; that stretch reads VNGFFAFLSSFVQGYGFFLFC. Position 248 (R248) is a topological domain, extracellular. Residues 249 to 269 traverse the membrane as a helical segment; it reads LLSGFGIGGAIPTVFSYFAEV. Residues 270–280 are Cytoplasmic-facing; the sequence is LAREKRGEHLS. A helical membrane pass occupies residues 281–301; it reads WLCMFWMIGGIYASAMAWAII. At 302–320 the chain is on the extracellular side; that stretch reads PHYGWSFSMGSAYQFHSWR. A helical transmembrane segment spans residues 321–341; that stretch reads VFVIVCALPCVSSVVALTFMP. Over 342-437 the chain is Cytoplasmic; it reads ESPRFLLEVG…PVRDNTIKLT (96 aa). Residues 438 to 458 form a helical membrane-spanning segment; sequence IVWFTLSFGYYGLSVWFPDVI. The Extracellular segment spans residues 459-578; the sequence is KPLQSDEYAL…CQITFDDDYS (120 aa). A Phosphotyrosine modification is found at Y466. N480, N484, N534, N559, and N565 each carry an N-linked (GlcNAc...) asparagine glycan. A (Microbial infection) C.botulinum neurotoxin type A-binding region spans residues 519 to 563; sequence SCTFEDVTSVNTYFKNCTFIDTVFDNTDFEPYKFIDSEFKNCSFF. The helical transmembrane segment at 579–599 threads the bilayer; it reads AYWIYFVNFLGTLAVLPGNIV. Residues 600–609 lie on the Cytoplasmic side of the membrane; the sequence is SALLMDRIGR. Residues 610–630 traverse the membrane as a helical segment; the sequence is LTMLGGSMVLSGISCFFLWFG. The Extracellular segment spans residues 631-636; it reads TSESMM. The helical transmembrane segment at 637-657 threads the bilayer; the sequence is IGMLCLYNGLTISAWNSLDVV. Over 658–669 the chain is Cytoplasmic; that stretch reads TVELYPTDRRAT. Residues 670–690 traverse the membrane as a helical segment; sequence GFGFLNALCKAAAVLGNLIFG. The Extracellular segment spans residues 691-698; that stretch reads SLVSITKS. Residues 699–719 form a helical membrane-spanning segment; sequence IPILLASTVLVCGGLVGLCLP. Topologically, residues 720–727 are cytoplasmic; the sequence is DTRTQVLM.

The protein belongs to the major facilitator superfamily. As to quaternary structure, interacts with SYT1 in a calcium-dependent manner. (Microbial infection) Interacts with C.botulinum neurotoxin type A1 and type A2 (BoNT/A, botA). Interaction is improved by glycosylation of SV2. In terms of processing, N-glycosylated. Upon expression in a kidney cell line the most abundant glycan on Asn-534 is GlcNAc(3)Hex(5), while on Asn-559 and Asn-565 the most abundant glycan is GlcNAc2Fuc1Man3GlcNAc3Gal3. Both Asn-559 and Asn-565 have a high degree of glycan heterogeneity.

It localises to the cytoplasmic vesicle. Its subcellular location is the secretory vesicle. It is found in the synaptic vesicle membrane. In terms of biological role, plays a role in the control of regulated secretion in neural and endocrine cells, enhancing selectively low-frequency neurotransmission. Positively regulates vesicle fusion by maintaining the readily releasable pool of secretory vesicles. Its function is as follows. (Microbial infection) Receptor for C.botulinum neurotoxin type A (BoNT/A, botA); the toxin probably binds via extracellular loop 4. Recognition by BoNT/A relies on both protein-protein and protein-N-glycosylation; glycosylation of Asn-559 increases its affinity for BoNT/A. Also serves as a receptor for the closely related C.botulinum neurotoxin type A2; glycosylation is not essential but enhances the interaction. Functionally, (Microbial infection) Possible receptor for C.botulinum neurotoxin type D (BoNT/D, botD); note that type D does not usually infect humans. The protein is Synaptic vesicle glycoprotein 2C (SV2C) of Homo sapiens (Human).